The following is a 316-amino-acid chain: Probable protein-L-isoaspartate O-methyltransferase (316 aa).

S-adenosyl-L-homocysteine contacts are provided by residues 103–106 (ATIS), His111, Ser136, 157–158 (EH), 187–188 (DG), Thr263, and Gln268. The active site involves Ser106.

This sequence belongs to the methyltransferase superfamily. L-isoaspartyl/D-aspartyl protein methyltransferase family.

Its subcellular location is the cytoplasm. It is found in the cytosol. The catalysed reaction is [protein]-L-isoaspartate + S-adenosyl-L-methionine = [protein]-L-isoaspartate alpha-methyl ester + S-adenosyl-L-homocysteine. Functionally, initiates the repair of damaged proteins by catalyzing methyl esterification of L-isoaspartyl and D-aspartyl residues produced by spontaneous isomerization and racemization of L-aspartyl and L-asparaginyl residues in aging peptides and proteins. The polypeptide is Probable protein-L-isoaspartate O-methyltransferase (pcmA) (Dictyostelium discoideum (Social amoeba)).